Consider the following 350-residue polypeptide: Inhibin beta E chain (350 aa).

Positions 1–21 are cleaved as a signal peptide; the sequence is MGLSNVQLWTILLWALAWVQS. Residues 22–236 constitute a propeptide that is removed on maturation; the sequence is TRSACPSCGA…EPGAGRARRR (215 aa). Asn-198 is a glycosylation site (N-linked (GlcNAc...) asparagine). 4 cysteine pairs are disulfide-bonded: Cys-240–Cys-248, Cys-247–Cys-315, Cys-276–Cys-347, and Cys-280–Cys-349.

This sequence belongs to the TGF-beta family. In terms of assembly, homodimeric or heterodimeric through association with alpha and beta subunits, linked by one or more disulfide bonds. Inhibins are heterodimers of one alpha and one beta subunit. Activins are homo- or heterodimers of beta subunits only.

The protein resides in the secreted. Inhibins and activins inhibit and activate, respectively, the secretion of follitropin by the pituitary gland. Inhibins/activins are involved in regulating a number of diverse functions such as hypothalamic and pituitary hormone secretion, gonadal hormone secretion, germ cell development and maturation, erythroid differentiation, insulin secretion, nerve cell survival, embryonic axial development or bone growth, depending on their subunit composition. Inhibins appear to oppose the functions of activins. In terms of biological role, activin E is a homodimer of INHBE secreted by the liver that plays a crucial role in regulating metabolic homeostasis particularly in lipid metabolism and energy homeostasis. Plays a central role in the regulation of adipose tissue lipolysis by preventing the influx of fatty acids from adipose tissue into the liver. Mechanistically, signals via ACVR1C to activate SMAD2/3 signaling, suppressing PPARG target genes in adipose tissue, thereby reducing liver lipid content and improving glycemic control. Induces beige adipocyte formation and thermogenesis in response to cold exposure. In Rattus norvegicus (Rat), this protein is Inhibin beta E chain (Inhbe).